The sequence spans 313 residues: MNIIFYHPFFNAEEWLAGLSQRLPQAQVRAWQPGDDRPADYALVWRPPHEMLANRGRLKGVFALGAGVDAILEQERAYPGTLPAGVPLLRLEDTGMAQQMQEYALSYVLRYFRRFDEYQLLQQQQEWRPLDPHQQDNFTIGILGAGVLGKSVAQKLTAFGFNVRCWSRSPKQIDGVQSFAGAEQRAAFLDGVQLLINLLPNTPETAGILNQQLFAHLAPGAYLINLARGAHLVEDDLLQALEQGQLAAATLDVFVTEPLPQAHPFWRHPRVTITPHIAAITLPQAAMDQIAANILALEAGQTPAGVVDVLLGY.

The active site involves arginine 228. The active-site Proton donor is the histidine 276.

Belongs to the D-isomer specific 2-hydroxyacid dehydrogenase family. GhrA subfamily.

The protein localises to the cytoplasm. The catalysed reaction is glycolate + NADP(+) = glyoxylate + NADPH + H(+). The enzyme catalyses (R)-glycerate + NAD(+) = 3-hydroxypyruvate + NADH + H(+). It catalyses the reaction (R)-glycerate + NADP(+) = 3-hydroxypyruvate + NADPH + H(+). Catalyzes the NADPH-dependent reduction of glyoxylate and hydroxypyruvate into glycolate and glycerate, respectively. This chain is Glyoxylate/hydroxypyruvate reductase A, found in Serratia proteamaculans (strain 568).